We begin with the raw amino-acid sequence, 481 residues long: Aspartyl/glutamyl-tRNA(Asn/Gln) amidotransferase subunit B (481 aa).

It belongs to the GatB/GatE family. GatB subfamily. As to quaternary structure, heterotrimer of A, B and C subunits.

The enzyme catalyses L-glutamyl-tRNA(Gln) + L-glutamine + ATP + H2O = L-glutaminyl-tRNA(Gln) + L-glutamate + ADP + phosphate + H(+). The catalysed reaction is L-aspartyl-tRNA(Asn) + L-glutamine + ATP + H2O = L-asparaginyl-tRNA(Asn) + L-glutamate + ADP + phosphate + 2 H(+). Functionally, allows the formation of correctly charged Asn-tRNA(Asn) or Gln-tRNA(Gln) through the transamidation of misacylated Asp-tRNA(Asn) or Glu-tRNA(Gln) in organisms which lack either or both of asparaginyl-tRNA or glutaminyl-tRNA synthetases. The reaction takes place in the presence of glutamine and ATP through an activated phospho-Asp-tRNA(Asn) or phospho-Glu-tRNA(Gln). This is Aspartyl/glutamyl-tRNA(Asn/Gln) amidotransferase subunit B from Cellvibrio japonicus (strain Ueda107) (Pseudomonas fluorescens subsp. cellulosa).